The sequence spans 494 residues: UPF0371 protein SP_0341 (494 aa).

This sequence belongs to the UPF0371 family.

The chain is UPF0371 protein SP_0341 from Streptococcus pneumoniae serotype 4 (strain ATCC BAA-334 / TIGR4).